The chain runs to 63 residues: Period circadian protein (63 aa).

The tract at residues 1–63 (EGSGGSGSSG…VTLTESLLNK (63 aa)) is disordered. 2 stretches are compositionally biased toward low complexity: residues 9–31 (SGNF…NAGT) and 39–49 (SAAASGASVNA). The segment covering 54–63 (VTLTESLLNK) has biased composition (polar residues).

As to quaternary structure, forms a heterodimer with timeless (TIM); the complex then translocates into the nucleus. Phosphorylated with a circadian rhythmicity, probably by the double-time protein (dbt). Phosphorylation could be implicated in the stability of per monomer and in the formation of heterodimer per-tim.

It localises to the nucleus. The protein resides in the cytoplasm. The protein localises to the perinuclear region. Functionally, essential for biological clock functions. Determines the period length of circadian and ultradian rhythms; an increase in PER dosage leads to shortened circadian rhythms and a decrease leads to lengthened circadian rhythms. Essential for the circadian rhythmicity of locomotor activity, eclosion behavior, and for the rhythmic component of the male courtship song that originates in the thoracic nervous system. The biological cycle depends on the rhythmic formation and nuclear localization of the TIM-PER complex. Light induces the degradation of TIM, which promotes elimination of PER. Nuclear activity of the heterodimer coordinatively regulates PER and TIM transcription through a negative feedback loop. Behaves as a negative element in circadian transcriptional loop. Does not appear to bind DNA, suggesting indirect transcriptional inhibition. The protein is Period circadian protein (per) of Drosophila immigrans (Fruit fly).